We begin with the raw amino-acid sequence, 453 residues long: Ezy-1 protein (453 aa).

The N-terminal stretch at 1 to 28 (MQLSNSLRSARSAAASSGCALASRPVVA) is a signal peptide. Disordered regions lie at residues 167–187 (SDGG…DADG), 272–307 (TGKA…SSGG), and 412–453 (SAGD…SPNM). The span at 279 to 300 (AEGDDGEGEEEGEAQDVGEDAV) shows a compositional bias: acidic residues. The span at 415–425 (DGHEPEPKRPE) shows a compositional bias: basic and acidic residues.

The chain is Ezy-1 protein (Ezy-1) from Chlamydomonas reinhardtii (Chlamydomonas smithii).